Reading from the N-terminus, the 415-residue chain is MIFDKEDFESFDPELWAAIHAEEIRQQQNIELIASENIVSKAVMAAQGSVLTNKYAEGYPGKRYYGGTEAVDVVENLAIERAKELFGAKFANVQPHSGSQANAAAYMALIQPGDTVLGMDLNAGGHLTHGASVNFSGKTYHFVPYGVNSETELLDYDEILKIAKQVQPKLIVAGASAYSRLIDFAKFREIADSVGAKLMVDMAHIAGLVATGAHPNPLPYADVVTTTTHKTLRGPRGGMILTNDEALAKKINSAIFPGTQGGPLEHVIAAKAVAFKEALDPEFTTYIEQVIKNTQAMAEEFAKVEGLRLIAGGSDNHLLNLKVLDLGINGKEAQDLLDSVHITLNKEAIPDETLSPFKTSGVRIGAAAITSRGFKEVEAKKVAQLVSEALVNHDNQEKLAEVRKAALELTRQFPL.

(6S)-5,6,7,8-tetrahydrofolate-binding positions include L121 and 125–127 (GHL). K230 bears the N6-(pyridoxal phosphate)lysine mark. Residue 355–357 (SPF) participates in (6S)-5,6,7,8-tetrahydrofolate binding.

Belongs to the SHMT family. As to quaternary structure, homodimer. Requires pyridoxal 5'-phosphate as cofactor.

The protein localises to the cytoplasm. It catalyses the reaction (6R)-5,10-methylene-5,6,7,8-tetrahydrofolate + glycine + H2O = (6S)-5,6,7,8-tetrahydrofolate + L-serine. Its pathway is one-carbon metabolism; tetrahydrofolate interconversion. It participates in amino-acid biosynthesis; glycine biosynthesis; glycine from L-serine: step 1/1. Functionally, catalyzes the reversible interconversion of serine and glycine with tetrahydrofolate (THF) serving as the one-carbon carrier. This reaction serves as the major source of one-carbon groups required for the biosynthesis of purines, thymidylate, methionine, and other important biomolecules. Also exhibits THF-independent aldolase activity toward beta-hydroxyamino acids, producing glycine and aldehydes, via a retro-aldol mechanism. This chain is Serine hydroxymethyltransferase, found in Lactococcus lactis subsp. lactis (strain IL1403) (Streptococcus lactis).